Consider the following 623-residue polypeptide: Bifunctional enzyme CysN/CysC (623 aa).

Residues 1–450 (MQSVIAYLKQ…HVARARIKGQ (450 aa)) are sulfate adenylyltransferase. Positions 14–228 (KPLLRFITCG…YLEALEPADV (215 aa)) constitute a tr-type G domain. A G1 region spans residues 23 to 30 (GSVDDGKS). 23 to 30 (GSVDDGKS) provides a ligand contact to GTP. The interval 81–85 (GITID) is G2. A G3 region spans residues 102–105 (DCPG). Residues 102–106 (DCPGH) and 157–160 (NKMD) contribute to the GTP site. Positions 157 to 160 (NKMD) are G4. The segment at 194-196 (SAL) is G5. Residues 451 to 623 (TPKVLWFTGL…VLSLLGVEGK (173 aa)) are adenylyl-sulfate kinase. 459–466 (GLSGAGKS) serves as a coordination point for ATP. Residue Ser533 is the Phosphoserine intermediate of the active site.

It in the C-terminal section; belongs to the APS kinase family. This sequence in the N-terminal section; belongs to the TRAFAC class translation factor GTPase superfamily. Classic translation factor GTPase family. CysN/NodQ subfamily. In terms of assembly, heterodimer composed of CysD, the smaller subunit, and CysNC.

It catalyses the reaction sulfate + ATP + H(+) = adenosine 5'-phosphosulfate + diphosphate. It carries out the reaction adenosine 5'-phosphosulfate + ATP = 3'-phosphoadenylyl sulfate + ADP + H(+). It functions in the pathway sulfur metabolism; hydrogen sulfide biosynthesis; sulfite from sulfate: step 1/3. The protein operates within sulfur metabolism; hydrogen sulfide biosynthesis; sulfite from sulfate: step 2/3. Functionally, with CysD forms the ATP sulfurylase (ATPS) that catalyzes the adenylation of sulfate producing adenosine 5'-phosphosulfate (APS) and diphosphate, the first enzymatic step in sulfur assimilation pathway. APS synthesis involves the formation of a high-energy phosphoric-sulfuric acid anhydride bond driven by GTP hydrolysis by CysN coupled to ATP hydrolysis by CysD. In terms of biological role, APS kinase catalyzes the synthesis of activated sulfate. The polypeptide is Bifunctional enzyme CysN/CysC (cysNC) (Xylella fastidiosa (strain Temecula1 / ATCC 700964)).